Here is a 180-residue protein sequence, read N- to C-terminus: Large ribosomal subunit protein uL5 (180 aa).

It belongs to the universal ribosomal protein uL5 family. As to quaternary structure, part of the 50S ribosomal subunit; part of the 5S rRNA/L5/L18/L25 subcomplex. Contacts the 5S rRNA and the P site tRNA. Forms a bridge to the 30S subunit in the 70S ribosome.

Its function is as follows. This is one of the proteins that bind and probably mediate the attachment of the 5S RNA into the large ribosomal subunit, where it forms part of the central protuberance. In the 70S ribosome it contacts protein S13 of the 30S subunit (bridge B1b), connecting the 2 subunits; this bridge is implicated in subunit movement. Contacts the P site tRNA; the 5S rRNA and some of its associated proteins might help stabilize positioning of ribosome-bound tRNAs. The protein is Large ribosomal subunit protein uL5 of Stenotrophomonas maltophilia (strain R551-3).